Reading from the N-terminus, the 135-residue chain is NNCPGDWLPMNGLCYKIFNELKAWEDAEMFCRKYKPGCHLASIHIYGESLEIAEYISDYHKGQAEVWIGLWDKKKDFSWEWTDRSCTDYLSWDKNQPDHYENKEFCVELVSLTGYRLWEDQVCESKNAFLCQCKF.

4 disulfides stabilise this stretch: Cys3/Cys14, Cys31/Cys131, Cys38/Cys133, and Cys106/Cys123. The region spanning 10–132 (MNGLCYKIFN…CESKNAFLCQ (123 aa)) is the C-type lectin domain. Ca(2+)-binding residues include Gln96, Asp98, Glu104, and Asp120. Positions 96–98 (QPD) match the Galactose-binding motif.

Belongs to the true venom lectin family. In terms of assembly, homodimer; disulfide-linked. As to expression, expressed by the venom gland.

The protein resides in the secreted. In terms of biological role, galactose-binding protein which recognizes specific carbohydrate structures and agglutinates a variety of animal cells by binding to cell-surface glycoproteins and glycolipids. Calcium-dependent lectin. Shows high hemagglutinating activity in the presence of human erythrocytes, which are agglutinated with a minimum hemagglutination concentration (MHC) of 2.5-0.35 ug/ml. Causes indirect nephrotoxicity. Causes reductions in perfusion pressures, renal vascular resistance, urinary flow, glomerular filtration rate, sodium, potassium and chloride tubular transport. Its effects may be caused by the release of inflammatory mediators. The sequence is that of C-type lectin BPL from Bothrops pirajai (Piraja's lancehead).